A 189-amino-acid polypeptide reads, in one-letter code: GTP cyclohydrolase 1 (189 aa).

Residues C79, H82, and C150 each contribute to the Zn(2+) site.

It belongs to the GTP cyclohydrolase I family. As to quaternary structure, homomer.

The enzyme catalyses GTP + H2O = 7,8-dihydroneopterin 3'-triphosphate + formate + H(+). The protein operates within cofactor biosynthesis; 7,8-dihydroneopterin triphosphate biosynthesis; 7,8-dihydroneopterin triphosphate from GTP: step 1/1. This Rickettsia peacockii (strain Rustic) protein is GTP cyclohydrolase 1.